A 434-amino-acid chain; its full sequence is Glutamate-1-semialdehyde 2,1-aminomutase 1 (434 aa).

N6-(pyridoxal phosphate)lysine is present on Lys-268.

This sequence belongs to the class-III pyridoxal-phosphate-dependent aminotransferase family. HemL subfamily. As to quaternary structure, homodimer. Pyridoxal 5'-phosphate serves as cofactor.

It is found in the cytoplasm. It carries out the reaction (S)-4-amino-5-oxopentanoate = 5-aminolevulinate. It functions in the pathway porphyrin-containing compound metabolism; protoporphyrin-IX biosynthesis; 5-aminolevulinate from L-glutamyl-tRNA(Glu): step 2/2. This chain is Glutamate-1-semialdehyde 2,1-aminomutase 1, found in Shouchella clausii (strain KSM-K16) (Alkalihalobacillus clausii).